Here is a 298-residue protein sequence, read N- to C-terminus: Probable 2-(5''-triphosphoribosyl)-3'-dephosphocoenzyme-A synthase 2 (298 aa).

It belongs to the CitG/MdcB family.

The catalysed reaction is 3'-dephospho-CoA + ATP = 2'-(5''-triphospho-alpha-D-ribosyl)-3'-dephospho-CoA + adenine. The protein is Probable 2-(5''-triphosphoribosyl)-3'-dephosphocoenzyme-A synthase 2 of Salmonella choleraesuis (strain SC-B67).